We begin with the raw amino-acid sequence, 363 residues long: Putative aryl-alcohol dehydrogenase AAD3 (363 aa).

Belongs to the aldo/keto reductase family. Aldo/keto reductase 2 subfamily.

The protein is Putative aryl-alcohol dehydrogenase AAD3 (AAD3) of Saccharomyces cerevisiae (strain ATCC 204508 / S288c) (Baker's yeast).